A 227-amino-acid chain; its full sequence is Cytochrome c oxidase subunit 2 (227 aa).

Residues 1–14 (MAYPMQLGLQDATS) lie on the Mitochondrial intermembrane side of the membrane. A helical membrane pass occupies residues 15–45 (PIMEELTDFHDHTLMIVFLISTLVLYIISMM). The Mitochondrial matrix segment spans residues 46–59 (LTTKLTHTSTMDAQ). The chain crosses the membrane as a helical span at residues 60–87 (EVETIWTVLPAVILVMIALPSLRILYMM). Residues 88-227 (DEINDPYLTV…QFESWASSMT (140 aa)) are Mitochondrial intermembrane-facing. His161, Cys196, Glu198, Cys200, His204, and Met207 together coordinate Cu cation. Residue Glu198 participates in Mg(2+) binding.

It belongs to the cytochrome c oxidase subunit 2 family. As to quaternary structure, component of the cytochrome c oxidase (complex IV, CIV), a multisubunit enzyme composed of 14 subunits. The complex is composed of a catalytic core of 3 subunits MT-CO1, MT-CO2 and MT-CO3, encoded in the mitochondrial DNA, and 11 supernumerary subunits COX4I, COX5A, COX5B, COX6A, COX6B, COX6C, COX7A, COX7B, COX7C, COX8 and NDUFA4, which are encoded in the nuclear genome. The complex exists as a monomer or a dimer and forms supercomplexes (SCs) in the inner mitochondrial membrane with NADH-ubiquinone oxidoreductase (complex I, CI) and ubiquinol-cytochrome c oxidoreductase (cytochrome b-c1 complex, complex III, CIII), resulting in different assemblies (supercomplex SCI(1)III(2)IV(1) and megacomplex MCI(2)III(2)IV(2)). Found in a complex with TMEM177, COA6, COX18, COX20, SCO1 and SCO2. Interacts with TMEM177 in a COX20-dependent manner. Interacts with COX20. Interacts with COX16. The cofactor is Cu cation.

The protein localises to the mitochondrion inner membrane. The catalysed reaction is 4 Fe(II)-[cytochrome c] + O2 + 8 H(+)(in) = 4 Fe(III)-[cytochrome c] + 2 H2O + 4 H(+)(out). Component of the cytochrome c oxidase, the last enzyme in the mitochondrial electron transport chain which drives oxidative phosphorylation. The respiratory chain contains 3 multisubunit complexes succinate dehydrogenase (complex II, CII), ubiquinol-cytochrome c oxidoreductase (cytochrome b-c1 complex, complex III, CIII) and cytochrome c oxidase (complex IV, CIV), that cooperate to transfer electrons derived from NADH and succinate to molecular oxygen, creating an electrochemical gradient over the inner membrane that drives transmembrane transport and the ATP synthase. Cytochrome c oxidase is the component of the respiratory chain that catalyzes the reduction of oxygen to water. Electrons originating from reduced cytochrome c in the intermembrane space (IMS) are transferred via the dinuclear copper A center (CU(A)) of subunit 2 and heme A of subunit 1 to the active site in subunit 1, a binuclear center (BNC) formed by heme A3 and copper B (CU(B)). The BNC reduces molecular oxygen to 2 water molecules using 4 electrons from cytochrome c in the IMS and 4 protons from the mitochondrial matrix. The polypeptide is Cytochrome c oxidase subunit 2 (MT-CO2) (Cratogeomys bursarius (Plains pocket gopher)).